The primary structure comprises 422 residues: Probable D-serine dehydratase (422 aa).

Residue Lys-105 is modified to N6-(pyridoxal phosphate)lysine.

It belongs to the serine/threonine dehydratase family. DsdA subfamily. The cofactor is pyridoxal 5'-phosphate.

The enzyme catalyses D-serine = pyruvate + NH4(+). In Carboxydothermus hydrogenoformans (strain ATCC BAA-161 / DSM 6008 / Z-2901), this protein is Probable D-serine dehydratase.